A 316-amino-acid polypeptide reads, in one-letter code: tRNA dimethylallyltransferase (316 aa).

An ATP-binding site is contributed by 17–24 (GPTASGKT). 19–24 (TASGKT) is a substrate binding site. Interaction with substrate tRNA stretches follow at residues 42–45 (DSAL), 166–170 (QRLSR), 247–252 (RCVGYR), and 280–287 (KRQITWLR).

Belongs to the IPP transferase family. As to quaternary structure, monomer. Mg(2+) is required as a cofactor.

It carries out the reaction adenosine(37) in tRNA + dimethylallyl diphosphate = N(6)-dimethylallyladenosine(37) in tRNA + diphosphate. Catalyzes the transfer of a dimethylallyl group onto the adenine at position 37 in tRNAs that read codons beginning with uridine, leading to the formation of N6-(dimethylallyl)adenosine (i(6)A). The polypeptide is tRNA dimethylallyltransferase (Cronobacter sakazakii (strain ATCC BAA-894) (Enterobacter sakazakii)).